Here is a 214-residue protein sequence, read N- to C-terminus: Cytochrome c biogenesis ATP-binding export protein CcmA (214 aa).

One can recognise an ABC transporter domain in the interval 12 to 214 (LAAHALAFSR…TRMLTLEAAA (203 aa)). An ATP-binding site is contributed by 44–51 (GDNGAGKT).

This sequence belongs to the ABC transporter superfamily. CcmA exporter (TC 3.A.1.107) family. The complex is composed of two ATP-binding proteins (CcmA) and two transmembrane proteins (CcmB).

The protein localises to the cell inner membrane. The enzyme catalyses heme b(in) + ATP + H2O = heme b(out) + ADP + phosphate + H(+). Functionally, part of the ABC transporter complex CcmAB involved in the biogenesis of c-type cytochromes; once thought to export heme, this seems not to be the case, but its exact role is uncertain. Responsible for energy coupling to the transport system. This Xanthomonas oryzae pv. oryzae (strain MAFF 311018) protein is Cytochrome c biogenesis ATP-binding export protein CcmA.